The chain runs to 488 residues: Tripartite motif-containing protein 6 (488 aa).

Residues C15–R60 form an RING-type zinc finger. Residues L92–M133 form a B box-type zinc finger. Zn(2+)-binding residues include C97, H100, C119, and H125. The stretch at L132–L223 forms a coiled coil. The B30.2/SPRY domain occupies D282–S488.

Belongs to the TRIM/RBCC family. Homotrimer. Forms heteromultimers (via B30.2/SPRY domain) with TRIM5. Interacts with MYC. Interacts (via SPRY domain) with IKBKE. Interacts with VAMP8; this interaction contributes to the activation of the type I interferon antiviral response. Interacts with DHX16.

It is found in the cytoplasm. It catalyses the reaction S-ubiquitinyl-[E2 ubiquitin-conjugating enzyme]-L-cysteine + [acceptor protein]-L-lysine = [E2 ubiquitin-conjugating enzyme]-L-cysteine + N(6)-ubiquitinyl-[acceptor protein]-L-lysine.. Its pathway is protein modification; protein ubiquitination. Functionally, E3 ubiquitin ligase that plays a crucial role in the activation of the IKBKE-dependent branch of the type I interferon signaling pathway. In concert with the ubiquitin-conjugating E2 enzyme UBE2K, synthesizes unanchored 'Lys-48'-linked polyubiquitin chains that promote the oligomerization and autophosphorylation of IKBKE leading to stimulation of an antiviral response. Also ubiquitinates MYC and inhibits its transcription activation activity, maintaining the pluripotency of embryonic stem cells. Promotes the association of unanchored 'Lys-48'-polyubiquitin chains with DHX16 leading to enhancement of RIGI-mediated innate antiviral immune response. This chain is Tripartite motif-containing protein 6 (Trim6), found in Mus musculus (Mouse).